A 191-amino-acid polypeptide reads, in one-letter code: Cytochrome c oxidase assembly protein CtaG (191 aa).

Over Met-1–Thr-9 the chain is Cytoplasmic. A helical; Signal-anchor for type II membrane protein membrane pass occupies residues Ala-10–Phe-30. Residues Tyr-31–Asn-191 are Periplasmic-facing.

The protein belongs to the COX11/CtaG family.

It localises to the cell inner membrane. Functionally, exerts its effect at some terminal stage of cytochrome c oxidase synthesis, probably by being involved in the insertion of the copper B into subunit I. This chain is Cytochrome c oxidase assembly protein CtaG, found in Cereibacter sphaeroides (strain ATCC 17023 / DSM 158 / JCM 6121 / CCUG 31486 / LMG 2827 / NBRC 12203 / NCIMB 8253 / ATH 2.4.1.) (Rhodobacter sphaeroides).